A 523-amino-acid polypeptide reads, in one-letter code: Calcium-dependent protein kinase 1 (523 aa).

The disordered stretch occupies residues methionine 1–glutamate 36. A lipid anchor (N-myristoyl glycine) is attached at glycine 2. Residue cysteine 3 is the site of S-palmitoyl cysteine attachment. The Protein kinase domain occupies tyrosine 57–isoleucine 324. ATP contacts are provided by residues leucine 63–valine 71, lysine 86, and lysine 90. Serine 65 is subject to Phosphoserine. Phosphoserine is present on serine 117. The Proton acceptor role is filled by aspartate 190. Phosphoserine is present on residues serine 216 and serine 219. Threonine 230 bears the Phosphothreonine mark. Serine 334 is modified (phosphoserine). The short motif at asparagine 345–serine 352 is the J domain autoinhibitory motif element. Residues asparagine 345–isoleucine 363 form a j domain region. The short motif at glutamine 353–isoleucine 363 is the J domain interacts with the EF-hand domains element. 4 consecutive EF-hand domains span residues glutamate 371–phenylalanine 406, asparagine 415–leucine 450, phenylalanine 451–serine 486, and glutamate 487–histidine 520. Ca(2+)-binding residues include aspartate 384, asparagine 386, aspartate 388, glutamine 390, glutamate 395, aspartate 428, aspartate 430, asparagine 432, tyrosine 434, glutamate 439, aspartate 464, aspartate 466, serine 468, lysine 470, glutamate 475, aspartate 498, asparagine 500, aspartate 502, methionine 504, and glutamate 509.

It belongs to the protein kinase superfamily. Ser/Thr protein kinase family. CDPK subfamily. Monomer. Mg(2+) is required as a cofactor. Post-translationally, myristoylated. Myristoylation and palmitoylation are required for the localization to the parasitophorous vacuole membrane. Palmitoylated. Palmitoylation increases in merozoites in response to low level of extracellular K(+) in the host blood. Myristoylation and palmitoylation are required for the localization to the parasitophorous vacuole membrane. In terms of processing, phosphorylation at Thr-230 may regulate CDPK1 kinase activity. Phosphorylation increases in response to an increase in intracellular Ca(2+) levels. Autophosphorylated in vitro. Autophosphorylation does not affect membrane localization in vitro.

Its subcellular location is the membrane. It localises to the cell membrane. It is found in the parasitophorous vacuole membrane. The protein localises to the cytoplasm. The protein resides in the cell projection. Its subcellular location is the cilium. It localises to the flagellum. It is found in the host cell membrane. The catalysed reaction is L-seryl-[protein] + ATP = O-phospho-L-seryl-[protein] + ADP + H(+). It catalyses the reaction L-threonyl-[protein] + ATP = O-phospho-L-threonyl-[protein] + ADP + H(+). Its activity is regulated as follows. Activated by calcium. Upon calcium binding to the EF-hand domains, the C-terminus of the junction domain (J domain) undergoes a conformational change which results in the dissociation of the pseudo-substrate inhibitory motif from the catalytic domain. This, in turn may facilitate the autophosphorylation of the activation loop at Thr-230, which leads to the kinase activation. Its function is as follows. Calcium-dependent protein kinase which acts as a sensor and effector of intracellular Ca(2+) levels probably in part downstream of cGMP-activated PKG kinase. During the liver stage, involved in sporozoite motility and thus in sporozoite invasion of host hepatocytes, probably together with CDPK4 and CDPK5. In the mosquito midgut and during the last stage of male gamete exflagellation, may play a role in the rupture of the host erythrocyte membrane. In the mosquito midgut, required for the differentiation of the zygote into the ookinete by promoting the translational activation of a subset of repressed mRNAs; these mRNAs are kept repressed in the zygote by the DOZI- or CITH-containing mRNP complexes. Dispensable during the asexual blood stage. In Plasmodium berghei (strain Anka), this protein is Calcium-dependent protein kinase 1.